We begin with the raw amino-acid sequence, 274 residues long: Lipid phosphate phosphatase 1 (274 aa).

The Lumenal segment spans residues M1–K15. Residues L16–Y33 form a helical membrane-spanning segment. The Cytoplasmic portion of the chain corresponds to S34–C69. Residues L70 to F87 form a helical membrane-spanning segment. Residues D88–S117 lie on the Lumenal side of the membrane. The helical transmembrane segment at I118–I139 threads the bilayer. Residues K136–P144 are phosphatase sequence motif I. Residues G140 to H189 lie on the Cytoplasmic side of the membrane. Residues P186–H189 form a phosphatase sequence motif II region. Residues S190 to W203 form a helical membrane-spanning segment. At Q204–S214 the chain is on the lumenal side. Residues C215–I231 form a helical membrane-spanning segment. Positions S228–D239 are phosphatase sequence motif III. The Cytoplasmic portion of the chain corresponds to D232–W237. Residues Y238–W255 form a helical membrane-spanning segment. Residues K256–V274 are Lumenal-facing.

The protein belongs to the PA-phosphatase related phosphoesterase family.

The protein localises to the golgi apparatus membrane. The enzyme catalyses a 1,2-diacyl-sn-glycerol 3-diphosphate + H2O = a 1,2-diacyl-sn-glycero-3-phosphate + phosphate + H(+). It carries out the reaction a 1,2-diacyl-sn-glycero-3-phosphate + H2O = a 1,2-diacyl-sn-glycerol + phosphate. The catalysed reaction is a 1-acyl-sn-glycero-3-phosphate + H2O = a 1-acyl-sn-glycerol + phosphate. PA phosphatase activity is magnesium ion-independent and potently inhibited by N-ethylmaleimide. Also inhibited by phenylglyoxal and propranolol. Its function is as follows. Catalyzes the dephosphorylation of diacylglycerol diphosphate (DGPP) to phosphatidate (PA) and the subsequent dephosphorylation of PA to diacylglycerol (DAG). Together with DPP1, regulates intracellular DGPP and PA levels which are phospholipid molecules believed to play a signaling role in stress response. Can also use lysophosphatidic acid (LPA) as a substrate. Substrate preference is PA &gt; DGPP &gt; LPA. This Saccharomyces cerevisiae (strain ATCC 204508 / S288c) (Baker's yeast) protein is Lipid phosphate phosphatase 1 (LPP1).